The sequence spans 120 residues: Anti-adapter protein IraM (120 aa).

This sequence belongs to the IraM/RssC family.

The protein resides in the cytoplasm. Functionally, involved in the stabilization of the sigma stress factor RpoS. This Salmonella typhimurium (strain LT2 / SGSC1412 / ATCC 700720) protein is Anti-adapter protein IraM.